Here is a 211-residue protein sequence, read N- to C-terminus: Thiamine-phosphate synthase (211 aa).

4-amino-2-methyl-5-(diphosphooxymethyl)pyrimidine-binding positions include 36 to 40 (QLRDK) and Asn-68. 2 residues coordinate Mg(2+): Asp-69 and Asp-88. Ser-107 is a 4-amino-2-methyl-5-(diphosphooxymethyl)pyrimidine binding site. 133 to 135 (TKS) is a 2-[(2R,5Z)-2-carboxy-4-methylthiazol-5(2H)-ylidene]ethyl phosphate binding site. Lys-136 contacts 4-amino-2-methyl-5-(diphosphooxymethyl)pyrimidine. Residues Gly-164 and 184–185 (IS) each bind 2-[(2R,5Z)-2-carboxy-4-methylthiazol-5(2H)-ylidene]ethyl phosphate.

This sequence belongs to the thiamine-phosphate synthase family. The cofactor is Mg(2+).

The enzyme catalyses 2-[(2R,5Z)-2-carboxy-4-methylthiazol-5(2H)-ylidene]ethyl phosphate + 4-amino-2-methyl-5-(diphosphooxymethyl)pyrimidine + 2 H(+) = thiamine phosphate + CO2 + diphosphate. It catalyses the reaction 2-(2-carboxy-4-methylthiazol-5-yl)ethyl phosphate + 4-amino-2-methyl-5-(diphosphooxymethyl)pyrimidine + 2 H(+) = thiamine phosphate + CO2 + diphosphate. The catalysed reaction is 4-methyl-5-(2-phosphooxyethyl)-thiazole + 4-amino-2-methyl-5-(diphosphooxymethyl)pyrimidine + H(+) = thiamine phosphate + diphosphate. It participates in cofactor biosynthesis; thiamine diphosphate biosynthesis; thiamine phosphate from 4-amino-2-methyl-5-diphosphomethylpyrimidine and 4-methyl-5-(2-phosphoethyl)-thiazole: step 1/1. Functionally, condenses 4-methyl-5-(beta-hydroxyethyl)thiazole monophosphate (THZ-P) and 2-methyl-4-amino-5-hydroxymethyl pyrimidine pyrophosphate (HMP-PP) to form thiamine monophosphate (TMP). The protein is Thiamine-phosphate synthase of Halalkalibacterium halodurans (strain ATCC BAA-125 / DSM 18197 / FERM 7344 / JCM 9153 / C-125) (Bacillus halodurans).